Here is a 343-residue protein sequence, read N- to C-terminus: Tryptophan--tRNA ligase (343 aa).

Residues 15 to 17 and 24 to 25 each bind ATP; these read QPT and GN. Residues 16 to 25 carry the 'HIGH' region motif; sequence PTSDSLHLGN. D145 serves as a coordination point for L-tryptophan. Residues 157–159, I196, and 205–209 each bind ATP; these read GED and KMSKS. The short motif at 205-209 is the 'KMSKS' region element; it reads KMSKS.

Belongs to the class-I aminoacyl-tRNA synthetase family. As to quaternary structure, homodimer.

The protein resides in the cytoplasm. It carries out the reaction tRNA(Trp) + L-tryptophan + ATP = L-tryptophyl-tRNA(Trp) + AMP + diphosphate + H(+). Functionally, catalyzes the attachment of tryptophan to tRNA(Trp). The chain is Tryptophan--tRNA ligase from Mycobacterium leprae (strain TN).